Consider the following 449-residue polypeptide: Glucose-6-phosphate isomerase (449 aa).

The Proton donor role is filled by E291. Catalysis depends on residues H312 and K426.

This sequence belongs to the GPI family.

It is found in the cytoplasm. The catalysed reaction is alpha-D-glucose 6-phosphate = beta-D-fructose 6-phosphate. It functions in the pathway carbohydrate biosynthesis; gluconeogenesis. It participates in carbohydrate degradation; glycolysis; D-glyceraldehyde 3-phosphate and glycerone phosphate from D-glucose: step 2/4. Its function is as follows. Catalyzes the reversible isomerization of glucose-6-phosphate to fructose-6-phosphate. The protein is Glucose-6-phosphate isomerase of Streptococcus pyogenes serotype M4 (strain MGAS10750).